Here is a 275-residue protein sequence, read N- to C-terminus: Ribosomal RNA small subunit methyltransferase A (275 aa).

Residues Asn-21, Leu-23, Gly-48, Glu-69, Asp-94, and Asn-115 each coordinate S-adenosyl-L-methionine.

Belongs to the class I-like SAM-binding methyltransferase superfamily. rRNA adenine N(6)-methyltransferase family. RsmA subfamily.

Its subcellular location is the cytoplasm. The enzyme catalyses adenosine(1518)/adenosine(1519) in 16S rRNA + 4 S-adenosyl-L-methionine = N(6)-dimethyladenosine(1518)/N(6)-dimethyladenosine(1519) in 16S rRNA + 4 S-adenosyl-L-homocysteine + 4 H(+). Its function is as follows. Specifically dimethylates two adjacent adenosines (A1518 and A1519) in the loop of a conserved hairpin near the 3'-end of 16S rRNA in the 30S particle. May play a critical role in biogenesis of 30S subunits. The chain is Ribosomal RNA small subunit methyltransferase A from Clostridium botulinum (strain Langeland / NCTC 10281 / Type F).